A 369-amino-acid chain; its full sequence is Probable trehalose-phosphate phosphatase I (369 aa).

The protein belongs to the trehalose phosphatase family. A divalent metal cation is required as a cofactor.

The catalysed reaction is alpha,alpha-trehalose 6-phosphate + H2O = alpha,alpha-trehalose + phosphate. It functions in the pathway glycan biosynthesis; trehalose biosynthesis. Its function is as follows. Removes the phosphate from trehalose 6-phosphate to produce free trehalose. Trehalose accumulation in plant may improve abiotic stress tolerance. This chain is Probable trehalose-phosphate phosphatase I (TPPI), found in Arabidopsis thaliana (Mouse-ear cress).